A 305-amino-acid chain; its full sequence is Protoheme IX farnesyltransferase 1 (305 aa).

Transmembrane regions (helical) follow at residues 22–42, 53–73, 94–114, 115–135, 154–174, 179–199, 230–250, and 283–303; these read IKTG…TLAL, IPEI…AGAF, VTGD…TIFG, LVFL…GLFL, IGSV…YPDV, IIGL…AIAI, LVIL…LMLV, and LFHM…GIFF.

The protein belongs to the UbiA prenyltransferase family. Protoheme IX farnesyltransferase subfamily. In terms of assembly, interacts with CtaA.

Its subcellular location is the cell membrane. It carries out the reaction heme b + (2E,6E)-farnesyl diphosphate + H2O = Fe(II)-heme o + diphosphate. Its pathway is porphyrin-containing compound metabolism; heme O biosynthesis; heme O from protoheme: step 1/1. Functionally, converts heme B (protoheme IX) to heme O by substitution of the vinyl group on carbon 2 of heme B porphyrin ring with a hydroxyethyl farnesyl side group. The sequence is that of Protoheme IX farnesyltransferase 1 from Bacillus cytotoxicus (strain DSM 22905 / CIP 110041 / 391-98 / NVH 391-98).